The primary structure comprises 200 residues: 5'(3')-deoxyribonucleotidase, cytosolic type (200 aa).

Catalysis depends on D12, which acts as the Nucleophile. Mg(2+) contacts are provided by D12 and D14. D14 acts as the Proton donor in catalysis. Substrate-binding residues include F20, F46, Y67, and T101. T102 is subject to Phosphothreonine. K136 lines the substrate pocket. Position 147 (D147) interacts with Mg(2+). At S184 the chain carries Phosphoserine.

It belongs to the 5'(3')-deoxyribonucleotidase family. As to quaternary structure, homodimer. Mg(2+) is required as a cofactor.

The protein localises to the cytoplasm. In terms of biological role, dephosphorylates the 5' and 2'(3')-phosphates of deoxyribonucleotides, with a preference for dUMP and dTMP, intermediate activity towards dGMP, and low activity towards dCMP and dAMP. The sequence is that of 5'(3')-deoxyribonucleotidase, cytosolic type (Nt5c) from Mus musculus (Mouse).